The primary structure comprises 208 residues: Small ribosomal subunit protein uS4 (208 aa).

In terms of domain architecture, S4 RNA-binding spans 98–158; that stretch reads CRLDTVSYRM…EKAKNHLRIK (61 aa).

It belongs to the universal ribosomal protein uS4 family. As to quaternary structure, part of the 30S ribosomal subunit. Contacts protein S5. The interaction surface between S4 and S5 is involved in control of translational fidelity.

Functionally, one of the primary rRNA binding proteins, it binds directly to 16S rRNA where it nucleates assembly of the body of the 30S subunit. In terms of biological role, with S5 and S12 plays an important role in translational accuracy. In Nitrosospira multiformis (strain ATCC 25196 / NCIMB 11849 / C 71), this protein is Small ribosomal subunit protein uS4.